The chain runs to 41 residues: Large ribosomal subunit protein bL36 (41 aa).

The protein belongs to the bacterial ribosomal protein bL36 family.

This chain is Large ribosomal subunit protein bL36, found in Neisseria gonorrhoeae (strain ATCC 700825 / FA 1090).